Consider the following 353-residue polypeptide: Protein RecA (353 aa).

65-72 lines the ATP pocket; that stretch reads GPESSGKT.

This sequence belongs to the RecA family.

It is found in the cytoplasm. In terms of biological role, can catalyze the hydrolysis of ATP in the presence of single-stranded DNA, the ATP-dependent uptake of single-stranded DNA by duplex DNA, and the ATP-dependent hybridization of homologous single-stranded DNAs. It interacts with LexA causing its activation and leading to its autocatalytic cleavage. The polypeptide is Protein RecA (Aeromonas salmonicida (strain A449)).